The following is a 522-amino-acid chain: 2-isopropylmalate synthase (522 aa).

A Pyruvate carboxyltransferase domain is found at 5 to 267 (VIIFDTTLRD…ETGINAKEIH (263 aa)). 4 residues coordinate Mn(2+): Asp14, His202, His204, and Asn238. The interval 392–522 (QLQQLVVQSD…MQKNRELGGV (131 aa)) is regulatory domain.

It belongs to the alpha-IPM synthase/homocitrate synthase family. LeuA type 1 subfamily. In terms of assembly, homodimer. Requires Mn(2+) as cofactor.

The protein resides in the cytoplasm. It catalyses the reaction 3-methyl-2-oxobutanoate + acetyl-CoA + H2O = (2S)-2-isopropylmalate + CoA + H(+). The protein operates within amino-acid biosynthesis; L-leucine biosynthesis; L-leucine from 3-methyl-2-oxobutanoate: step 1/4. In terms of biological role, catalyzes the condensation of the acetyl group of acetyl-CoA with 3-methyl-2-oxobutanoate (2-ketoisovalerate) to form 3-carboxy-3-hydroxy-4-methylpentanoate (2-isopropylmalate). This Shewanella baltica (strain OS185) protein is 2-isopropylmalate synthase.